Consider the following 211-residue polypeptide: MIASLRGTVIDKGLDYVTIECAGVGYQCSGTATTIAELPRGEEVFVTTALVVREDSQTLYVFKDADEKRAFATLQSVSGVGARLALAILSVITPQELARAVSNGDHKTLQRAPGVGKRLAERMAVDLKGKVADLGEIADTGAVGAAGAVGDGGDGQAVAPDVREQVLEALVGLGFTESKAGTTIEAVLSQWSAPQAPDASGLLRASLAAIK.

The tract at residues 1–63 is domain I; that stretch reads MIASLRGTVI…EDSQTLYVFK (63 aa). Residues 64-142 form a domain II region; the sequence is DADEKRAFAT…DLGEIADTGA (79 aa). The segment at 143–157 is flexible linker; the sequence is VGAAGAVGDGGDGQA. Residues 158 to 211 form a domain III region; the sequence is VAPDVREQVLEALVGLGFTESKAGTTIEAVLSQWSAPQAPDASGLLRASLAAIK.

Belongs to the RuvA family. As to quaternary structure, homotetramer. Forms an RuvA(8)-RuvB(12)-Holliday junction (HJ) complex. HJ DNA is sandwiched between 2 RuvA tetramers; dsDNA enters through RuvA and exits via RuvB. An RuvB hexamer assembles on each DNA strand where it exits the tetramer. Each RuvB hexamer is contacted by two RuvA subunits (via domain III) on 2 adjacent RuvB subunits; this complex drives branch migration. In the full resolvosome a probable DNA-RuvA(4)-RuvB(12)-RuvC(2) complex forms which resolves the HJ.

It is found in the cytoplasm. In terms of biological role, the RuvA-RuvB-RuvC complex processes Holliday junction (HJ) DNA during genetic recombination and DNA repair, while the RuvA-RuvB complex plays an important role in the rescue of blocked DNA replication forks via replication fork reversal (RFR). RuvA specifically binds to HJ cruciform DNA, conferring on it an open structure. The RuvB hexamer acts as an ATP-dependent pump, pulling dsDNA into and through the RuvAB complex. HJ branch migration allows RuvC to scan DNA until it finds its consensus sequence, where it cleaves and resolves the cruciform DNA. This chain is Holliday junction branch migration complex subunit RuvA, found in Corynebacterium jeikeium (strain K411).